Consider the following 222-residue polypeptide: UPF0688 protein C1orf174 homolog (222 aa).

Disordered stretches follow at residues 23–57 and 98–158; these read STSL…RTSK and EDGA…EPVP. Residues 33–48 show a composition bias toward polar residues; it reads ASSTSAKTTCLASSSH. Positions 121–131 are enriched in basic and acidic residues; sequence VSEEPSVKAEE. Ser172 is modified (phosphoserine).

It belongs to the UPF0688 family.

The protein resides in the nucleus. This is UPF0688 protein C1orf174 homolog from Rattus norvegicus (Rat).